Here is a 648-residue protein sequence, read N- to C-terminus: UDP-galactose:fucoside alpha-3-galactosyltransferase (648 aa).

WD repeat units follow at residues 320-358 (NHTDIITSINSSDDGKLFTTSIDKSIKIWKFENTSGNDT), 372-420 (HKRG…IQTF), 422-461 (GHTGIINQLIVIPNSSYFFTCSDDNTIRQFDLNNINFKRV), 464-505 (GHNG…NIIK), 507-546 (NQGGWIRKIIYNDNLNQLISGGNDGTIKIWSCDNLNNFND), 556-595 (NENSSINDLQFDSDTNLIYCAFENGSLKSFKLTSNNNNNN), and 617-648 (HLNSSINCIHISKSLNLLFSGGFDKQIKSWDL).

It belongs to the glycosyltransferase 77 family. The cofactor is Mn(2+).

It localises to the cytoplasm. The enzyme catalyses an alpha-L-fucosyl-(1-&gt;2)-beta-D-galactosyl derivative + UDP-alpha-D-galactose = an alpha-D-galactosyl-(1-&gt;3)-[alpha-L-fucosyl-(1-&gt;2)]-beta-D-galactosyl derivative + UDP + H(+). The protein operates within protein modification; protein glycosylation. With respect to regulation, stimulated by dithiothreitol (DTT) in vitro. Totally inhibited by EDTA. Specifically catalyzes the transfer of a galactosyl residue to the hydroxyproline-linked saccharide on Skp1 protein (fpaA/fpaB). Catalyzes the formation of a Gal-alpha-1,3-Fuc linkage, leading to Gal-Fuc-Gal-GlcNAc-HyPro143-Skp1. This is UDP-galactose:fucoside alpha-3-galactosyltransferase (agtA) from Dictyostelium discoideum (Social amoeba).